Here is a 1137-residue protein sequence, read N- to C-terminus: Calcium-activated potassium channel subunit alpha-1 (1137 aa).

Residues 1–44 (MSNNINANNLNTDSSSSPVNVPKMDALIIPVTMEVPCDSRGQRM) are Extracellular-facing. A helical membrane pass occupies residues 45–65 (WWAFLASSMVTFFGGLFIILL). Topologically, residues 66–137 (WRTLKYLWTV…MISAQTLTGR (72 aa)) are cytoplasmic. The helical transmembrane segment at 138 to 158 (VLVVLVFALSIGALVIYFIDS) threads the bilayer. The Extracellular segment spans residues 159–173 (SNPIESCQNFYKDFT). The helical transmembrane segment at 174-194 (LQIDMAFNVFFLLYFGLRFIA) threads the bilayer. At 195-198 (ANDK) the chain is on the cytoplasmic side. A helical transmembrane segment spans residues 199–219 (LWFWLEVNSVVDFFTVPPVFV). The Extracellular segment spans residues 220–223 (SVYL). Residues 224–244 (NRSWLGLRFLRALRLIQFSEI) traverse the membrane as a helical; Voltage-sensor segment. Topologically, residues 245 to 259 (LQFLNILKTSNSIKL) are cytoplasmic. A helical membrane pass occupies residues 260 to 280 (VNLCSIFISTWLTAAGFIHLV). Residues 281–294 (ENSGDPWENFQNNQ) lie on the Extracellular side of the membrane. The pore-forming intramembrane region spans 295–317 (QLTYWECVYLLMVTMSTVGYGDV). The Selectivity for potassium motif lies at 311 to 314 (TVGY). Residues 318 to 326 (YAKTTLGRL) are Extracellular-facing. A helical transmembrane segment spans residues 327-347 (FMVFFILGGLAMFASYVPEII). At 348–1137 (ELIGNRKKYG…KQKYVQEDRL (790 aa)) the chain is on the cytoplasmic side. The RCK N-terminal 1 domain maps to 366–508 (RKHIVVCGHI…WNWKEGDDAI (143 aa)). Glu398, Gln421, and Glu423 together coordinate Mg(2+). Residues 515 to 535 (LGFIAQSCLAPGLSTMLANLF) form a segment S7 region. The segment at 572–592 (LSFPAVCELVFAKLKLLMIAI) is segment S8. The heme-binding motif stretch occupies residues 636-640 (CKACH). The interval 660-688 (EQPSTLSPKKKQRNGGMRNSPNSSPKLMR) is disordered. Residues 738–758 (VLSGHVVVCIFGDVKSALIGL) form a segment S9 region. The RCK N-terminal 2 domain maps to 740–884 (SGHVVVCIFG…MDRSSPDNSP (145 aa)). Positions 904-926 (TELVNDSNVQFLDQDDDDDPDTE) match the Calcium bowl motif. Ca(2+) is bound by residues Gln913, Asp916, Asp919, and Asp921. Positions 933-953 (FACGTAFAVSVLDSLMSATYF) are segment S10. The segment covering 1088–1112 (ASLSHSSHSSYSSSKKSSSVHSIPS) has biased composition (low complexity). The segment at 1088-1137 (ASLSHSSHSSYSSSKKSSSVHSIPSTANRPNRTKTRDSREKQKYVQEDRL) is disordered. Over residues 1121 to 1137 (KTRDSREKQKYVQEDRL) the composition is skewed to basic and acidic residues.

This sequence belongs to the potassium channel family. Calcium-activated (TC 1.A.1.3) subfamily. KCa1.1/KCNMA1 sub-subfamily. In terms of assembly, homotetramer; which constitutes the calcium-activated potassium channel.

Its subcellular location is the cell membrane. It carries out the reaction K(+)(in) = K(+)(out). With respect to regulation, ethanol and carbon monoxide-bound heme increase channel activation. Heme inhibits channel activation. In terms of biological role, potassium channel activated by both membrane depolarization or increase in cytosolic Ca(2+) that mediates export of K(+). It is also activated by the concentration of cytosolic Mg(2+). Its activation dampens the excitatory events that elevate the cytosolic Ca(2+) concentration and/or depolarize the cell membrane. It therefore contributes to repolarization of the membrane potential. Plays a key role in controlling excitability in a number of systems, such as regulation of the contraction of smooth muscle, the tuning of hair cells in the cochlea, regulation of transmitter release, and innate immunity. In smooth muscles, its activation by high level of Ca(2+), caused by ryanodine receptors in the sarcoplasmic reticulum, regulates the membrane potential. In cochlea cells, its number and kinetic properties partly determine the characteristic frequency of each hair cell and thereby helps to establish a tonotopic map. Highly sensitive to both iberiotoxin (IbTx) and charybdotoxin (CTX). This Gallus gallus (Chicken) protein is Calcium-activated potassium channel subunit alpha-1 (KCNMA1).